We begin with the raw amino-acid sequence, 217 residues long: Insulin-like growth factor 2.S (217 aa).

Positions 1 to 56 (MEQLSCKHRSSSVEAEAQLCRQTESRSTQLPRMSVMRHLFLLSITFLVYTLDSAKA) are cleaved as a signal peptide. The interval 57–83 (YRATETLCGGELVDTLQFVCGDRGFYF) is b. 3 disulfides stabilise this stretch: cysteine 64–cysteine 103, cysteine 76–cysteine 116, and cysteine 102–cysteine 107. The tract at residues 84 to 96 (STNNGRSNRRPNR) is c. The interval 97–117 (GIVDVCCFKSCDLELLETYCA) is a. Residues 118-123 (KPTKNE) are d. Residues 124 to 217 (RDVSTAPATA…LQQASEPSHN (94 aa)) constitute a propeptide, e peptide.

The protein belongs to the insulin family.

Its subcellular location is the secreted. In terms of biological role, the insulin-like growth factors, isolated from plasma, are structurally and functionally related to insulin but have a much higher growth-promoting activity. Promotes anterior neural development. Acts as a ligand for integrin which is required for IGF2 signaling. The polypeptide is Insulin-like growth factor 2.S (Xenopus laevis (African clawed frog)).